The following is a 541-amino-acid chain: Chaperonin GroEL 5 (541 aa).

ATP-binding positions include 30–33 (TLGP), Gly-415, and Asp-496.

It belongs to the chaperonin (HSP60) family. As to quaternary structure, forms a cylinder of 14 subunits composed of two heptameric rings stacked back-to-back. Interacts with the co-chaperonin GroES.

It localises to the cytoplasm. It catalyses the reaction ATP + H2O + a folded polypeptide = ADP + phosphate + an unfolded polypeptide.. In terms of biological role, together with its co-chaperonin GroES, plays an essential role in assisting protein folding. The GroEL-GroES system forms a nano-cage that allows encapsulation of the non-native substrate proteins and provides a physical environment optimized to promote and accelerate protein folding. This chain is Chaperonin GroEL 5, found in Bradyrhizobium diazoefficiens (strain JCM 10833 / BCRC 13528 / IAM 13628 / NBRC 14792 / USDA 110).